A 374-amino-acid chain; its full sequence is Putative cullin-like protein 2 (374 aa).

The protein belongs to the cullin family.

This chain is Putative cullin-like protein 2, found in Arabidopsis thaliana (Mouse-ear cress).